We begin with the raw amino-acid sequence, 596 residues long: Proline--tRNA ligase (596 aa).

Belongs to the class-II aminoacyl-tRNA synthetase family. ProS type 1 subfamily. In terms of assembly, homodimer.

It is found in the cytoplasm. It catalyses the reaction tRNA(Pro) + L-proline + ATP = L-prolyl-tRNA(Pro) + AMP + diphosphate. Functionally, catalyzes the attachment of proline to tRNA(Pro) in a two-step reaction: proline is first activated by ATP to form Pro-AMP and then transferred to the acceptor end of tRNA(Pro). As ProRS can inadvertently accommodate and process non-cognate amino acids such as alanine and cysteine, to avoid such errors it has two additional distinct editing activities against alanine. One activity is designated as 'pretransfer' editing and involves the tRNA(Pro)-independent hydrolysis of activated Ala-AMP. The other activity is designated 'posttransfer' editing and involves deacylation of mischarged Ala-tRNA(Pro). The misacylated Cys-tRNA(Pro) is not edited by ProRS. This chain is Proline--tRNA ligase, found in Prochlorococcus marinus (strain NATL1A).